Reading from the N-terminus, the 92-residue chain is Small ribosomal subunit protein uS19c (92 aa).

The protein belongs to the universal ribosomal protein uS19 family.

It localises to the plastid. The protein localises to the chloroplast. Protein S19 forms a complex with S13 that binds strongly to the 16S ribosomal RNA. This chain is Small ribosomal subunit protein uS19c, found in Amborella trichopoda.